The sequence spans 523 residues: Light-independent protochlorophyllide reductase subunit B (523 aa).

Aspartate 36 contacts [4Fe-4S] cluster. The active-site Proton donor is the aspartate 290. 425–426 (GL) contacts substrate.

The protein belongs to the ChlB/BchB/BchZ family. Protochlorophyllide reductase is composed of three subunits; ChlL, ChlN and ChlB. Forms a heterotetramer of two ChlB and two ChlN subunits. [4Fe-4S] cluster serves as cofactor.

The enzyme catalyses chlorophyllide a + oxidized 2[4Fe-4S]-[ferredoxin] + 2 ADP + 2 phosphate = protochlorophyllide a + reduced 2[4Fe-4S]-[ferredoxin] + 2 ATP + 2 H2O. Its pathway is porphyrin-containing compound metabolism; chlorophyll biosynthesis (light-independent). Functionally, component of the dark-operative protochlorophyllide reductase (DPOR) that uses Mg-ATP and reduced ferredoxin to reduce ring D of protochlorophyllide (Pchlide) to form chlorophyllide a (Chlide). This reaction is light-independent. The NB-protein (ChlN-ChlB) is the catalytic component of the complex. This is Light-independent protochlorophyllide reductase subunit B from Prochlorococcus marinus (strain MIT 9215).